We begin with the raw amino-acid sequence, 706 residues long: K(+)-insensitive pyrophosphate-energized proton pump (706 aa).

5 helical membrane passes run 1–21 (MTAL…AIWA), 62–82 (VVIF…GFAI), 83–103 (GAIL…RANV), 129–149 (LLVA…LIHF), and 164–184 (VALG…GGIF). Residue K186 coordinates substrate. Mg(2+) is bound by residues D189, D193, N216, and D219. 6 helical membrane passes run 231–251 (LFET…IFFG), 263–283 (TLPL…TFFV), 300–320 (IATG…LIGF), 330–350 (GLAL…IIWI), 393–413 (IVII…GIAI), and 414–434 (ATTT…FGPV). D436 contacts Mg(2+). The next 4 membrane-spanning stretches (helical) occupy residues 467–487 (AVTK…LFAA), 516–536 (YVVV…AMGM), 585–605 (IIPS…IYAI), and 616–636 (AFSA…FVAI). D646, D672, and D676 together coordinate Ca(2+). K679 provides a ligand contact to substrate. The chain crosses the membrane as a helical span at residues 685–705 (AVNPMIKITNIVALLLLAILA).

This sequence belongs to the H(+)-translocating pyrophosphatase (TC 3.A.10) family. K(+)-insensitive subfamily. In terms of assembly, homodimer. Mg(2+) serves as cofactor.

Its subcellular location is the cell inner membrane. It catalyses the reaction diphosphate + H2O + H(+)(in) = 2 phosphate + 2 H(+)(out). In terms of biological role, proton pump that utilizes the energy of pyrophosphate hydrolysis as the driving force for proton movement across the membrane. Generates a proton motive force. The polypeptide is K(+)-insensitive pyrophosphate-energized proton pump (Rhodopseudomonas palustris (strain ATCC BAA-98 / CGA009)).